The chain runs to 226 residues: Glutathione peroxidase 3 (226 aa).

The signal sequence occupies residues 1–24 (MARILRASCLLSLLLAGFVPPGRG). The active site involves Sec-73. Position 73 (Sec-73) is a non-standard amino acid, selenocysteine.

This sequence belongs to the glutathione peroxidase family. In terms of assembly, homotetramer. In terms of tissue distribution, secreted in plasma.

It localises to the secreted. It carries out the reaction 2 glutathione + H2O2 = glutathione disulfide + 2 H2O. The enzyme catalyses tert-butyl hydroperoxide + 2 glutathione = tert-butanol + glutathione disulfide + H2O. Its function is as follows. Protects cells and enzymes from oxidative damage, by catalyzing the reduction of hydrogen peroxide, lipid peroxides and organic hydroperoxide, by glutathione. This is Glutathione peroxidase 3 from Mus musculus (Mouse).